The sequence spans 83 residues: Putative membrane protein insertion efficiency factor (83 aa).

This sequence belongs to the UPF0161 family.

It localises to the cell membrane. In terms of biological role, could be involved in insertion of integral membrane proteins into the membrane. The chain is Putative membrane protein insertion efficiency factor from Staphylococcus saprophyticus subsp. saprophyticus (strain ATCC 15305 / DSM 20229 / NCIMB 8711 / NCTC 7292 / S-41).